The following is a 321-amino-acid chain: L-lactate dehydrogenase (321 aa).

NAD(+) contacts are provided by residues Val-19, Asp-40, Lys-45, Tyr-71, and 85–86 (GA). Residues Gln-88, Arg-94, and 126–129 (NPVD) each bind substrate. Residues 124-126 (ATN) and Ser-149 contribute to the NAD(+) site. Substrate is bound at residue 154–157 (DTAR). Beta-D-fructose 1,6-bisphosphate contacts are provided by Arg-159 and His-174. Residue His-181 is the Proton acceptor of the active site. Position 226 is a phosphotyrosine (Tyr-226). Residue Thr-235 coordinates substrate.

This sequence belongs to the LDH/MDH superfamily. LDH family. In terms of assembly, homotetramer.

It is found in the cytoplasm. The enzyme catalyses (S)-lactate + NAD(+) = pyruvate + NADH + H(+). It participates in fermentation; pyruvate fermentation to lactate; (S)-lactate from pyruvate: step 1/1. With respect to regulation, allosterically activated by fructose 1,6-bisphosphate (FBP). In terms of biological role, catalyzes the conversion of lactate to pyruvate. This Oceanobacillus iheyensis (strain DSM 14371 / CIP 107618 / JCM 11309 / KCTC 3954 / HTE831) protein is L-lactate dehydrogenase.